A 135-amino-acid polypeptide reads, in one-letter code: uncharacterized protein (135 aa).

The next 3 membrane-spanning stretches (helical) occupy residues 12–32 (IPIL…YNGI), 68–88 (SMIG…AKFC), and 98–118 (GILY…FYLF).

The protein localises to the cell membrane. This is an uncharacterized protein from Methanocaldococcus jannaschii (strain ATCC 43067 / DSM 2661 / JAL-1 / JCM 10045 / NBRC 100440) (Methanococcus jannaschii).